A 206-amino-acid polypeptide reads, in one-letter code: Probable glutathione S-transferase 8 (206 aa).

The 78-residue stretch at 2-79 (VHYKLSYFPI…FLARQFGING (78 aa)) folds into the GST N-terminal domain. Glutathione contacts are provided by residues Y8, W39, K43, 49 to 51 (GQL), and 63 to 64 (QS). Residues 81–206 (CAWEEAQVNS…WLETRPETQF (126 aa)) form the GST C-terminal domain.

Belongs to the GST superfamily. Sigma family.

It catalyses the reaction RX + glutathione = an S-substituted glutathione + a halide anion + H(+). Functionally, conjugation of reduced glutathione to a wide number of exogenous and endogenous hydrophobic electrophiles. This chain is Probable glutathione S-transferase 8 (gst-8), found in Caenorhabditis elegans.